Reading from the N-terminus, the 838-residue chain is Probable inorganic carbon transporter subunit DabA (838 aa).

Zn(2+) is bound by residues cysteine 353, aspartate 355, histidine 537, and cysteine 552.

The protein belongs to the inorganic carbon transporter (TC 9.A.2) DabA family. Forms a complex with DabB. The cofactor is Zn(2+).

The protein resides in the cell membrane. Functionally, part of an energy-coupled inorganic carbon pump. This is Probable inorganic carbon transporter subunit DabA from Roseiflexus sp. (strain RS-1).